The following is a 159-amino-acid chain: MNISIVVVGKIKEKYLKLGIDEFKKRLSKYCKLEIIELDDEKAPENLSVKEMEIIKDKEGKKILGKIKHNSYVIALAIDGKGLSSEELAKTMSDLAVRGNSSLCFIIGGSLGLSDEVLGRADYRLSFSRMTFPHQMMRLILLEQIYRAYRINNGEPYHK.

S-adenosyl-L-methionine is bound by residues L76, G108, and 127–132 (FSRMTF).

The protein belongs to the RNA methyltransferase RlmH family. In terms of assembly, homodimer.

Its subcellular location is the cytoplasm. It catalyses the reaction pseudouridine(1915) in 23S rRNA + S-adenosyl-L-methionine = N(3)-methylpseudouridine(1915) in 23S rRNA + S-adenosyl-L-homocysteine + H(+). Its function is as follows. Specifically methylates the pseudouridine at position 1915 (m3Psi1915) in 23S rRNA. This chain is Ribosomal RNA large subunit methyltransferase H, found in Clostridioides difficile (strain 630) (Peptoclostridium difficile).